Consider the following 424-residue polypeptide: tRNA (guanine-N(7)-)-methyltransferase non-catalytic subunit wuho (424 aa).

Positions 42–92 are disordered; sequence LKGHTSQSQESCTAAAAASTATAASGQAPGGKEQQLANQPEEGGTSASASG. A compositionally biased stretch (low complexity) spans 46–68; sequence TSQSQESCTAAAAASTATAASGQ. 4 WD repeats span residues 96-137, 184-223, 227-265, and 324-364; these read ATST…ARLL, GHLS…DIHS, GHRE…ELLQ, and AGSW…PASS.

This sequence belongs to the WD repeat TRM82 family. As to quaternary structure, forms a heterodimer with the catalytic subunit Mettl1. Interacts with mei-P26 and weakly interacts with bgcn; required for the function or formation of the mei-P26-bgcn-bam-sxl complex. Interacts with nanos; may be involved in mei-P26-dependent derepression of the BMP signaling pathway. Interacts with Myc; the interaction may be mediated by mei-P26 and may be involved in the regulation of ribosome biogenesis. As to expression, in testis, it is present at high level in hub cells, a niche for germline stem cells of testis. Ubiquitously expressed in all testicular cells throughout spermatogenesis. Ubiquitously expressed in all germline and somatic cells of the ovary.

The protein resides in the nucleus. Its subcellular location is the cytoplasm. Its pathway is tRNA modification; N(7)-methylguanine-tRNA biosynthesis. In terms of biological role, required for the Mettl1-dependent formation of N(7)-methylguanine at position 46 (m7G46) in tRNA. In the Mettl1-wuho methyltransferase complex, it is required to stabilize and induce conformational changes of the catalytic subunit. Required for binding of nanos mRNA and repression of translation by the mei-P26-bgcn-bam-sxl complex. May cooperate with mei-P26 and nanos to derepress the BMP signaling pathway. May cooperate with mei-P26 to suppress expression of a subset of microRNAs. May cooperate with mei-P26 to regulate bam expression levels in germline cells during gametogenesis. Required to promote mitosis to meiosis transition during gametogenesis. May regulate germline cell division in part by regulating ribosome biogenesis. The chain is tRNA (guanine-N(7)-)-methyltransferase non-catalytic subunit wuho from Drosophila melanogaster (Fruit fly).